Consider the following 80-residue polypeptide: Pre-core protein X (80 aa).

Residues 2–32 constitute a propeptide that is removed on maturation; sequence ALTCRLRFPVPGFRGRMHRRRGMAGHGLTGG. The interval 18–45 is disordered; that stretch reads MHRRRGMAGHGLTGGMRRAHHRRRRASH. Residues 34–45 show a composition bias toward basic residues; the sequence is RRAHHRRRRASH. Residues 52–80 constitute a propeptide that is removed on maturation; it reads ILPLLIPLIAAAIGAVPGIASVALQAQRH.

Belongs to the adenoviridae core protein X family. As to quaternary structure, interacts with the core-capsid bridging protein; this interaction bridges the virus core to the capsid. Cleaved by the viral protease during virion maturation to form the mature protein.

Its subcellular location is the host nucleus. The protein resides in the host nucleolus. The protein localises to the virion. Functionally, interacts with the viral DNA and aids in tightly condensing it within the capsid. Cleavage of pre-core protein X may serve to partially relax this structure within the mature virion prior to its entry into the nucleus. The polypeptide is Pre-core protein X (Human adenovirus C serotype 2 (HAdV-2)).